The sequence spans 715 residues: Fatty acid oxidation complex subunit alpha (715 aa).

Positions 1-190 (MTTTSAFMLN…KAGLVDDVVP (190 aa)) are enoyl-CoA hydratase. Residues 306-714 (GPLNSVGILG…FWTNGETDQG (409 aa)) form a 3-hydroxyacyl-CoA dehydrogenase region.

The protein in the N-terminal section; belongs to the enoyl-CoA hydratase/isomerase family. It in the central section; belongs to the 3-hydroxyacyl-CoA dehydrogenase family. Heterotetramer of two alpha chains (FadJ) and two beta chains (FadI).

It is found in the cytoplasm. It catalyses the reaction a (3S)-3-hydroxyacyl-CoA = a (2E)-enoyl-CoA + H2O. It carries out the reaction a 4-saturated-(3S)-3-hydroxyacyl-CoA = a (3E)-enoyl-CoA + H2O. The catalysed reaction is a (3S)-3-hydroxyacyl-CoA + NAD(+) = a 3-oxoacyl-CoA + NADH + H(+). The enzyme catalyses (3S)-3-hydroxybutanoyl-CoA = (3R)-3-hydroxybutanoyl-CoA. It functions in the pathway lipid metabolism; fatty acid beta-oxidation. Functionally, catalyzes the formation of a hydroxyacyl-CoA by addition of water on enoyl-CoA. Also exhibits 3-hydroxyacyl-CoA epimerase and 3-hydroxyacyl-CoA dehydrogenase activities. The protein is Fatty acid oxidation complex subunit alpha of Salmonella choleraesuis (strain SC-B67).